The sequence spans 584 residues: Segmentation polarity homeobox protein engrailed (584 aa).

Disordered stretches follow at residues 1–27 (MALE…PQQH), 141–198 (EESD…SKPS), 343–380 (IGQA…SSST), 392–451 (CSSA…GGKN), and 465–492 (DRPS…PRTA). The span at 12 to 23 (APSPPGCLPHSP) shows a compositional bias: pro residues. Over residues 160 to 174 (TEEDEEEDDDIDVDD) the composition is skewed to acidic residues. Polar residues predominate over residues 189–198 (HQQSKQSKPS). Low complexity-rich tracts occupy residues 348 to 380 (STTP…SSST) and 392 to 405 (CSSA…SPSS). Basic and acidic residues predominate over residues 478–489 (QPKDKTNDEKRP). Residues 486–545 (EKRPRTAFSSEQLARLKREFNENRYLTERRRQQLSSELGLNEAQIKIWFQNKRAKIKKST) constitute a DNA-binding region (homeobox).

Belongs to the engrailed homeobox family.

The protein resides in the nucleus. Its function is as follows. This protein specifies the body segmentation pattern. It is required for the development of the central nervous system. Transcriptional regulator that repress activated promoters. The protein is Segmentation polarity homeobox protein engrailed (en) of Drosophila virilis (Fruit fly).